Reading from the N-terminus, the 287-residue chain is uncharacterized protein (287 aa).

The signal sequence occupies residues 1–20; that stretch reads MKVICGSVFLFSLFFQVVLG. Over 22 to 201 the chain is Extracellular; sequence YFSSSSGNPN…AFYGPRRNIK (180 aa). N-linked (GlcNAc...) asparagine glycosylation is found at asparagine 120, asparagine 154, and asparagine 166. Residues 202-222 traverse the membrane as a helical segment; it reads AAIAVPSVILGLILVALVYYA. Over 223-287 the chain is Cytoplasmic; it reads YRKDTWKIYM…YYQSQVKKFH (65 aa).

The protein localises to the membrane. This is an uncharacterized protein from Schizosaccharomyces pombe (strain 972 / ATCC 24843) (Fission yeast).